Consider the following 171-residue polypeptide: Disulfide bond formation protein B (171 aa).

Residues 1-8 (MRLSYRLV) are Cytoplasmic-facing. The helical transmembrane segment at 9 to 25 (SGLLVLASIVGMSFALY) threads the bilayer. Residues 26–43 (LEHVKGLEPCPLCIFQRV) lie on the Periplasmic side of the membrane. An intrachain disulfide couples C35 to C38. A helical membrane pass occupies residues 44-60 (GLMAMGFVALIAFLHNP). The Cytoplasmic portion of the chain corresponds to 61–67 (VSNAIKR). A helical membrane pass occupies residues 68–85 (FYAFLAGVAILWSVGVAG). The Periplasmic portion of the chain corresponds to 86–142 (RHVWLQHLPPDQVPSCGPGLNYLIDALPMKTVLQEVLSGSGECAAIDWTFLGQSLPV). C101 and C128 are disulfide-bonded. Residues 143-161 (WSLAYFLLLLLVCLWQLFR) form a helical membrane-spanning segment. Residues 162–171 (FYPVFKTAKK) are Cytoplasmic-facing.

The protein belongs to the DsbB family.

Its subcellular location is the cell inner membrane. Its function is as follows. Required for disulfide bond formation in some periplasmic proteins. Acts by oxidizing the DsbA protein. The polypeptide is Disulfide bond formation protein B (Acinetobacter baumannii (strain ATCC 17978 / DSM 105126 / CIP 53.77 / LMG 1025 / NCDC KC755 / 5377)).